A 426-amino-acid polypeptide reads, in one-letter code: 3-phosphoshikimate 1-carboxyvinyltransferase (426 aa).

The 3-phosphoshikimate site is built by Lys-22, Ser-23, and Arg-27. Lys-22 is a phosphoenolpyruvate binding site. Positions 96 and 124 each coordinate phosphoenolpyruvate. 2 residues coordinate 3-phosphoshikimate: Ser-170 and Ser-171. Position 172 (Gln-172) interacts with phosphoenolpyruvate. 3-phosphoshikimate is bound by residues Ser-198, Asp-314, Asn-337, and Lys-341. Residue Asp-314 is the Proton acceptor of the active site. Arg-345, Arg-387, and Lys-412 together coordinate phosphoenolpyruvate.

Belongs to the EPSP synthase family. In terms of assembly, homotetramer.

The protein localises to the cytoplasm. The catalysed reaction is 3-phosphoshikimate + phosphoenolpyruvate = 5-O-(1-carboxyvinyl)-3-phosphoshikimate + phosphate. It functions in the pathway metabolic intermediate biosynthesis; chorismate biosynthesis; chorismate from D-erythrose 4-phosphate and phosphoenolpyruvate: step 6/7. Functionally, catalyzes the transfer of the enolpyruvyl moiety of phosphoenolpyruvate (PEP) to the 5-hydroxyl of shikimate-3-phosphate (S3P) to produce enolpyruvyl shikimate-3-phosphate and inorganic phosphate. The polypeptide is 3-phosphoshikimate 1-carboxyvinyltransferase (Vibrio cholerae serotype O1 (strain ATCC 39315 / El Tor Inaba N16961)).